Reading from the N-terminus, the 258-residue chain is L-aspartate dehydrogenase 1 (258 aa).

Residues A121 and N181 each contribute to the NAD(+) site. The active site involves H211.

It belongs to the L-aspartate dehydrogenase family.

It catalyses the reaction L-aspartate + NADP(+) + H2O = oxaloacetate + NH4(+) + NADPH + H(+). The catalysed reaction is L-aspartate + NAD(+) + H2O = oxaloacetate + NH4(+) + NADH + H(+). Its pathway is cofactor biosynthesis; NAD(+) biosynthesis; iminoaspartate from L-aspartate (dehydrogenase route): step 1/1. Specifically catalyzes the NAD or NADP-dependent dehydrogenation of L-aspartate to iminoaspartate. The sequence is that of L-aspartate dehydrogenase 1 from Bordetella pertussis (strain Tohama I / ATCC BAA-589 / NCTC 13251).